The primary structure comprises 154 residues: Myoglobin (154 aa).

In terms of domain architecture, Globin spans Gly-2–Lys-148. His-65 contributes to the nitrite binding site. Residue His-65 coordinates O2. His-94 is a heme b binding site.

As to quaternary structure, monomeric.

It localises to the cytoplasm. The protein localises to the sarcoplasm. It catalyses the reaction Fe(III)-heme b-[protein] + nitric oxide + H2O = Fe(II)-heme b-[protein] + nitrite + 2 H(+). It carries out the reaction H2O2 + AH2 = A + 2 H2O. In terms of biological role, monomeric heme protein which primary function is to store oxygen and facilitate its diffusion within muscle tissues. Reversibly binds oxygen through a pentacoordinated heme iron and enables its timely and efficient release as needed during periods of heightened demand. Depending on the oxidative conditions of tissues and cells, and in addition to its ability to bind oxygen, it also has a nitrite reductase activity whereby it regulates the production of bioactive nitric oxide. Under stress conditions, like hypoxia and anoxia, it also protects cells against reactive oxygen species thanks to its pseudoperoxidase activity. This Struthio camelus (Common ostrich) protein is Myoglobin (MB).